Consider the following 497-residue polypeptide: COP9 signalosome complex subunit 6 (497 aa).

The MPN domain maps to 21–162 (VALHPLPILE…LTIYESNLEI (142 aa)). Disordered stretches follow at residues 230 to 282 (ATED…KNRD), 324 to 350 (YLSS…LDQP), and 435 to 497 (AKNS…RFDH). Residues 236–246 (SDKPLMKKVVD) are compositionally biased toward basic and acidic residues. 2 stretches are compositionally biased toward low complexity: residues 258–272 (SDDA…SSAA) and 333–343 (QQQQQQQQQQQ). The span at 440 to 453 (RREQASHGGGERFN) shows a compositional bias: basic and acidic residues. Positions 475–488 (VGEGSASGSGGSGP) are enriched in gly residues.

This sequence belongs to the peptidase M67A family. CSN6 subfamily. Component of the COP9 signalosome (CSN) complex.

The protein localises to the cytoplasm. The protein resides in the nucleus. Functionally, component of the COP9 signalosome (CSN) complex that acts as an regulator of the ubiquitin (Ubl) conjugation pathway by mediating the deneddylation of the cullin subunit of SCF-type E3 ubiquitin-protein ligase complexes. The CSN complex is involved in the regulation of the circadian clock through its control of the stability of the SCF(FWD1) complex. This chain is COP9 signalosome complex subunit 6 (csn-6), found in Neurospora crassa (strain ATCC 24698 / 74-OR23-1A / CBS 708.71 / DSM 1257 / FGSC 987).